The primary structure comprises 451 residues: Protein tweety homolog 1-B (451 aa).

Residues 1–43 lie on the Extracellular side of the membrane; sequence MSTSHGYRASWWTYILHQVPHTNFQFEVVDNQFAPQEWSYQQA. A helical transmembrane segment spans residues 44-64; it reads LLFLASIAGLCLAISLVLICV. Residues 65–86 lie on the Cytoplasmic side of the membrane; that stretch reads YLIKFCCCASQEDDDSKSHRVC. A helical membrane pass occupies residues 87–107; that stretch reads CVTWSCVAAVIICCAGIGIGF. Topologically, residues 108 to 214 are extracellular; that stretch reads YGNSETNDGV…QVNFIEDYRW (107 aa). Residue Asn128 is glycosylated (N-linked (GlcNAc...) asparagine). A helical transmembrane segment spans residues 215–235; it reads LAYILLLLLDLIICLFTLLSL. The Cytoplasmic portion of the chain corresponds to 236 to 240; that stretch reads AKQIK. The helical transmembrane segment at 241–261 threads the bilayer; the sequence is WLVIVMTVVSFFVLLLSWGSM. Topologically, residues 262-390 are extracellular; it reads GLEMATAVGL…LKGLCYDGME (129 aa). 2 cysteine pairs are disulfide-bonded: Cys275/Cys385 and Cys303/Cys370. Residues Asn284 and Asn355 are each glycosylated (N-linked (GlcNAc...) asparagine). The chain crosses the membrane as a helical span at residues 391–411; sequence GILFLLLFSFLSALSFTAAVC. The Cytoplasmic portion of the chain corresponds to 412-451; the sequence is SLPRAWKRFRNRDLDYDDMDEDDPFNPQESKRFVQWQSSI.

The protein belongs to the tweety family. As to quaternary structure, homotetramer; disulfide-linked. Homodimer.

Its subcellular location is the cell membrane. The catalysed reaction is chloride(in) = chloride(out). It carries out the reaction L-glutamate(out) = L-glutamate(in). Its function is as follows. May act as a calcium-independent, swelling-dependent volume-regulated anion channel (VRAC-swell) which plays a pivotal role in the process of regulatory volume decrease (RVD) in the brain through the efflux of anions like chloride and organic osmolytes like glutamate. The protein is Protein tweety homolog 1-B (ttyh1-b) of Xenopus laevis (African clawed frog).